We begin with the raw amino-acid sequence, 493 residues long: Galactose-1-phosphate uridylyltransferase (493 aa).

This sequence belongs to the galactose-1-phosphate uridylyltransferase type 2 family.

It is found in the cytoplasm. The catalysed reaction is alpha-D-galactose 1-phosphate + UDP-alpha-D-glucose = alpha-D-glucose 1-phosphate + UDP-alpha-D-galactose. It participates in carbohydrate metabolism; galactose metabolism. The protein is Galactose-1-phosphate uridylyltransferase (galT) of Streptococcus thermophilus.